The following is a 484-amino-acid chain: MSMSSSNITSGFIDIATFDEIEKYMYGGPTATAYFVREIRKSTWFTQVPVPLSRNTGNAAFGQEWSVSISRAGDYLLQTWLRVNIPQVTLNPLLAATFSLRWTRNLMHNLIREATITFNDLVAARFDNYHLDFWSAFTVPASKRTGYDNMIGNVSSLINPVAPGGNLGSTGGTNLNLPLPFFFSRDTGVALPTAALPYNEMQINFNFRDWTELLVLQNSALVAPASPYVPIVVPTHLTVAPVLGPVQVWANYAIVSNEERRRMGCAIRDILIEQVQTAPRQNYTPLTNASPTFDIRFSHAIKALFFSVRNKTSASEWSNYATSSPVVTGATVNFEPTGSFDPIANTTLIYENTNRLGAMGSDYFSLINPFYHAPTIPSFIGYHLYSYSLHFYDLDPMGSTNYGKLTNVSVVPQASPAAVNAASGAGGFPGSDYPQSYEFVIVAVNNNIVRISGGETPQNYLSGSFVTLLNRRKWSREGPMIMVQ.

The protein belongs to the NCLDV major capsid protein family. In terms of assembly, homotrimer.

It localises to the virion. Major capsid protein that self assembles to form an icosahedral capsid. Represents around 50% of the total virion protein mass. The sequence is that of Major capsid protein (MCP) from Wiseana iridescent virus (WIV).